Reading from the N-terminus, the 118-residue chain is MSRVKRGVTARARHKKVLKQAKGYYGARSRVYRVAKQAVIKAGQYAYRDRKVKKRTFRSLWIVRINAAARQHDISYSQLINGLNKAGVELDRKALAELAVYNKDAFAAVVEKAKAALA.

Belongs to the bacterial ribosomal protein bL20 family.

Its function is as follows. Binds directly to 23S ribosomal RNA and is necessary for the in vitro assembly process of the 50S ribosomal subunit. It is not involved in the protein synthesizing functions of that subunit. The protein is Large ribosomal subunit protein bL20 of Francisella philomiragia subsp. philomiragia (strain ATCC 25017 / CCUG 19701 / FSC 153 / O#319-036).